An 80-amino-acid polypeptide reads, in one-letter code: Translation initiation factor IF-1, chloroplastic (80 aa).

The region spanning 1 to 74 (MKEQKWIHEG…TRGRIIYRLR (74 aa)) is the S1-like domain.

Belongs to the IF-1 family. In terms of assembly, component of the 30S ribosomal translation pre-initiation complex which assembles on the 30S ribosome in the order IF-2 and IF-3, IF-1 and N-formylmethionyl-tRNA(fMet); mRNA recruitment can occur at any time during PIC assembly.

The protein resides in the plastid. It is found in the chloroplast. One of the essential components for the initiation of protein synthesis. Stabilizes the binding of IF-2 and IF-3 on the 30S subunit to which N-formylmethionyl-tRNA(fMet) subsequently binds. Helps modulate mRNA selection, yielding the 30S pre-initiation complex (PIC). Upon addition of the 50S ribosomal subunit IF-1, IF-2 and IF-3 are released leaving the mature 70S translation initiation complex. This chain is Translation initiation factor IF-1, chloroplastic, found in Illicium oligandrum (Star anise).